Consider the following 142-residue polypeptide: Large ribosomal subunit protein uL11 (142 aa).

This sequence belongs to the universal ribosomal protein uL11 family. As to quaternary structure, part of the ribosomal stalk of the 50S ribosomal subunit. Interacts with L10 and the large rRNA to form the base of the stalk. L10 forms an elongated spine to which L12 dimers bind in a sequential fashion forming a multimeric L10(L12)X complex. One or more lysine residues are methylated.

Forms part of the ribosomal stalk which helps the ribosome interact with GTP-bound translation factors. The polypeptide is Large ribosomal subunit protein uL11 (Rhodopseudomonas palustris (strain HaA2)).